Here is a 701-residue protein sequence, read N- to C-terminus: MASEDTLSSNPLLQNFDFPPFDSVDAHHVRPGIRALLQQLEAELEQLEKAVEPSWPKLVEPLEKIIDRLSVVWGMINHLKAVKDTPELRAAIEEVQPEKVKFQLRLGQSKPIYNAFKAIRESPDWNSLSEARQRLVEAQIKEAVLSGIALEDDKREEFNKIEQELEKLSHKFSENVLDATKKFEKLITDKKEIEGLPPSALGLFAQAAVSKGHETATADTGPWLITLDAPSYLPVMQHAKNRALREEVYRAYLSRASSGDLDNTAIIDQILKLRLEKAKLLGYRNYAEVSMATKMATVEKADELLEKLRSASWDPAVQDIEDLKSFAKNQGAAEADSLTHWDITFWSERLRESKYDINEEELRPYFSLPKVMDALFGLAKTLFGIDVVPADGVAPVWNSDVRFYCVKDSSGNPTAYFYFDPYSRPSEKRDGAWMDEVFSRSRVMAQKGSSVRLPVAQMVCNQTPPVGDKPSLMTFREVETVFHEFGHALQHMLTKEDEGLVAGIRNIEWDAVELPSQFMENWCYHRDTLMSIAKHYQTGETLPENVYKKLLAARTFRAGSLSLRQLKFATVDLELHTKYMPGGAETIYEVDQRVSIKTQVIPPLPEDRFLCSFSHIFAGGYAAGYYSYKWAEVLSADAFSAFEDAGLDDIKAVKETGQRFRNTILALGGGKAPLKVFVEFRGREPSPEPLLRHNGLLAASA.

The residue at position 2 (A2) is an N-acetylalanine. The stretch at 148 to 194 (IALEDDKREEFNKIEQELEKLSHKFSENVLDATKKFEKLITDKKEIE) forms a coiled coil. H483 serves as a coordination point for Zn(2+). E484 is an active-site residue. H487 and E513 together coordinate Zn(2+). 615–621 (HIFAGGY) is a substrate binding site.

The protein belongs to the peptidase M3 family. Requires Zn(2+) as cofactor.

It is found in the cytoplasm. The protein localises to the cytosol. The enzyme catalyses Hydrolysis of oligopeptides, with broad specificity. Gly or Ala commonly occur as P1 or P1' residues, but more distant residues are also important, as is shown by the fact that Z-Gly-Pro-Gly-|-Gly-Pro-Ala is cleaved, but not Z-(Gly)(5).. Its activity is regulated as follows. Inhibited by salicylic acid. Functionally, oligopeptidase that may be involved in the degradation of proteasome-generated peptides. Binds salicylic acid. This is Probable cytosolic oligopeptidase A from Arabidopsis thaliana (Mouse-ear cress).